The sequence spans 715 residues: MSKQVFETTLAGKPLRVEVGEIAKQANGAAMIYYGDTVVLSTAVAKAKVGQTDFFPLMVIYAEKQYAAGKIPGGFFRREGRPSEVETLTSRLIDRPLRPLFDDGYRNEVQVVNTVLSSDPEASSQMAAMLGSSIALEISNIPFMGPIAGAHVGRIDGQFVLNPSSEQLNVSDIDLIVAGTKDAINMVEAGAKQVSEEVMLEAILFGHEAIKELCAFQETIKKAFGVEKVEPELLSLNQAIFDEVFAYKGKELVKAVSLVDKQERYDVIDAIKDEVVAHFEQRNFWMTVDGKEVLDADQKKELMNQVKVSLDRIVTKEVRRLITEDKVRPDGRGLDEIRPLASSVDLLPRTHGSALFTRGQTQALGIVTLGSLNENQIIDGLEQETVTKRFMLHYNFPPFSVGETGRYGAPGRREIGHGALGERALLQVLPSEDEFPYAIRVVSEITESNGSSSQATICVGSMALMAAGVPIKAPVAGIAMGLIMDGEHYSILSDIQGMEDHEGDMDFKVAGTKDGITALQMDIKIQGITTEIMKEALEQARKGRLHILSHMNTVISETRTELSAFAPKVKMIRINPDKIRDVIGAGGKIITQIIEDHNNVKIDIEQDGRVFIMHTDSAWLNKTAAYIESLVREAKVGELYEAKVTRLLMDKDGKKIQGVFAEIFPGTEGLVHISKWEKERTESLDGKVKVGDQILVKVVKIDERGRVDLSRKDAL.

Mg(2+)-binding residues include aspartate 500 and aspartate 506. Residues 567-634 (PKVKMIRINP…AYIESLVREA (68 aa)) form the KH domain. In terms of domain architecture, S1 motif spans 637 to 712 (GELYEAKVTR…ERGRVDLSRK (76 aa)).

It belongs to the polyribonucleotide nucleotidyltransferase family. Mg(2+) is required as a cofactor.

The protein localises to the cytoplasm. The catalysed reaction is RNA(n+1) + phosphate = RNA(n) + a ribonucleoside 5'-diphosphate. Its function is as follows. Involved in mRNA degradation. Catalyzes the phosphorolysis of single-stranded polyribonucleotides processively in the 3'- to 5'-direction. In Acholeplasma laidlawii (strain PG-8A), this protein is Polyribonucleotide nucleotidyltransferase.